A 434-amino-acid polypeptide reads, in one-letter code: Putative nuclease OPG089 (434 aa).

Residues Asp33, Asp74, Glu168, Asp170, Asp196, and Asp198 each contribute to the Mg(2+) site.

Belongs to the XPG/RAD2 endonuclease family. FEN1 subfamily. Mg(2+) serves as cofactor.

The protein localises to the virion. Putative nuclease that seems to be required for double-strand break repair, homologous recombination, and production of full-length viral genomic DNA. In Vaccinia virus (strain Western Reserve) (VACV), this protein is Putative nuclease OPG089 (OPG089).